Reading from the N-terminus, the 210-residue chain is MPDSSHSISSKDVASAISLYDQSIYTNNRSTNLDLDQRSMSPSNIASGEDRITRTNSGCSITSGASMIATKDGIQGINVKRDGIPKYSLNLLNSMVRKQYDHNNGTKSPTPKTSNMVDPKNKKKNKKKKNDKDDKYKVSHDQTEKFYKLNTTSNSNLTSDSTTSLSDQFYFQKSNADSAPLDNANYPLSDHSPSLNSMDNTTKHSSNVHT.

S18, S39, S41, S57, and S60 each carry phosphoserine. Residues 33-46 (LDLDQRSMSPSNIA) show a composition bias toward polar residues. The segment at 33-58 (LDLDQRSMSPSNIASGEDRITRTNSG) is disordered. Disordered stretches follow at residues 100–139 (YDHN…YKVS) and 177–210 (DSAP…NVHT). Polar residues predominate over residues 102-116 (HNNGTKSPTPKTSNM). The segment covering 130–139 (NDKDDKYKVS) has biased composition (basic and acidic residues). Residues S178, S189, and S192 each carry the phosphoserine modification. Residues 191 to 210 (HSPSLNSMDNTTKHSSNVHT) are compositionally biased toward polar residues.

This is an uncharacterized protein from Saccharomyces cerevisiae (strain ATCC 204508 / S288c) (Baker's yeast).